The sequence spans 101 residues: Small ribosomal subunit protein uS14 (101 aa).

The protein belongs to the universal ribosomal protein uS14 family. In terms of assembly, part of the 30S ribosomal subunit. Contacts proteins S3 and S10.

Binds 16S rRNA, required for the assembly of 30S particles and may also be responsible for determining the conformation of the 16S rRNA at the A site. This Blochmanniella floridana protein is Small ribosomal subunit protein uS14.